The following is a 225-amino-acid chain: Cytochrome c oxidase subunit 2 (225 aa).

Residues 1 to 25 lie on the Mitochondrial intermembrane side of the membrane; sequence MSTWMMFMFQESNSLYADNLVSFHN. A helical transmembrane segment spans residues 26-47; sequence MVMIIVIMISTLTVYIIFDLFL. Residues 48–62 are Mitochondrial matrix-facing; sequence NKFSNLYLLKNHNIE. Residues 63 to 82 traverse the membrane as a helical segment; that stretch reads IIWMIVPIVILLIICFPSLK. Over 83-225 the chain is Mitochondrial intermembrane; sequence ILYLIDEIVN…YFMNWIYKMN (143 aa). Cu cation contacts are provided by His-159, Cys-194, Glu-196, Cys-198, His-202, and Met-205. Residue Glu-196 participates in Mg(2+) binding.

The protein belongs to the cytochrome c oxidase subunit 2 family. Component of the cytochrome c oxidase (complex IV, CIV), a multisubunit enzyme composed of a catalytic core of 3 subunits and several supernumerary subunits. The complex exists as a monomer or a dimer and forms supercomplexes (SCs) in the inner mitochondrial membrane with ubiquinol-cytochrome c oxidoreductase (cytochrome b-c1 complex, complex III, CIII). Cu cation is required as a cofactor.

The protein localises to the mitochondrion inner membrane. It catalyses the reaction 4 Fe(II)-[cytochrome c] + O2 + 8 H(+)(in) = 4 Fe(III)-[cytochrome c] + 2 H2O + 4 H(+)(out). In terms of biological role, component of the cytochrome c oxidase, the last enzyme in the mitochondrial electron transport chain which drives oxidative phosphorylation. The respiratory chain contains 3 multisubunit complexes succinate dehydrogenase (complex II, CII), ubiquinol-cytochrome c oxidoreductase (cytochrome b-c1 complex, complex III, CIII) and cytochrome c oxidase (complex IV, CIV), that cooperate to transfer electrons derived from NADH and succinate to molecular oxygen, creating an electrochemical gradient over the inner membrane that drives transmembrane transport and the ATP synthase. Cytochrome c oxidase is the component of the respiratory chain that catalyzes the reduction of oxygen to water. Electrons originating from reduced cytochrome c in the intermembrane space (IMS) are transferred via the dinuclear copper A center (CU(A)) of subunit 2 and heme A of subunit 1 to the active site in subunit 1, a binuclear center (BNC) formed by heme A3 and copper B (CU(B)). The BNC reduces molecular oxygen to 2 water molecules using 4 electrons from cytochrome c in the IMS and 4 protons from the mitochondrial matrix. The protein is Cytochrome c oxidase subunit 2 (COII) of Apis florea (Dwarf honeybee).